The primary structure comprises 289 residues: ATP synthase gamma chain (289 aa).

Belongs to the ATPase gamma chain family. In terms of assembly, F-type ATPases have 2 components, CF(1) - the catalytic core - and CF(0) - the membrane proton channel. CF(1) has five subunits: alpha(3), beta(3), gamma(1), delta(1), epsilon(1). CF(0) has three main subunits: a, b and c.

Its subcellular location is the cell inner membrane. Its function is as follows. Produces ATP from ADP in the presence of a proton gradient across the membrane. The gamma chain is believed to be important in regulating ATPase activity and the flow of protons through the CF(0) complex. The chain is ATP synthase gamma chain from Aromatoleum aromaticum (strain DSM 19018 / LMG 30748 / EbN1) (Azoarcus sp. (strain EbN1)).